We begin with the raw amino-acid sequence, 296 residues long: Chronophin (296 aa).

Aspartate 25 serves as the catalytic Nucleophile. 2 residues coordinate Mg(2+): aspartate 25 and aspartate 27. The active-site Proton donor is the aspartate 27. Residues 58 to 60 (SNN), histidine 182, and lysine 213 contribute to the substrate site. Mg(2+) is bound at residue aspartate 238.

The protein belongs to the HAD-like hydrolase superfamily. In terms of assembly, homodimer. It depends on Mg(2+) as a cofactor. Ubiquitously expressed (at protein level). Highly expressed in all the regions of central nerve system except the spinal cord. Also expressed at high level in liver and testis. In fetus, it is weakly expressed in all organs except brain.

It localises to the cytoplasm. The protein resides in the cytosol. The protein localises to the cytoskeleton. It is found in the cell projection. Its subcellular location is the ruffle membrane. It localises to the lamellipodium membrane. The protein resides in the cell membrane. The enzyme catalyses pyridoxal 5'-phosphate + H2O = pyridoxal + phosphate. The catalysed reaction is pyridoxine 5'-phosphate + H2O = pyridoxine + phosphate. It catalyses the reaction pyridoxamine + phosphate = pyridoxamine 5'-phosphate + H2O. It carries out the reaction O-phospho-L-seryl-[protein] + H2O = L-seryl-[protein] + phosphate. With respect to regulation, inhibited by NaF, Zn(2+), Ca(2+), Mn(2+) and EDTA. In terms of biological role, functions as a pyridoxal phosphate (PLP) phosphatase, which also catalyzes the dephosphorylation of pyridoxine 5'-phosphate (PNP) and pyridoxamine 5'-phosphate (PMP), with order of substrate preference PLP &gt; PNP &gt; PMP and therefore plays a role in vitamin B6 metabolism. Also functions as a protein serine phosphatase that specifically dephosphorylates 'Ser-3' in proteins of the actin-depolymerizing factor (ADF)/cofilin family like CFL1 and DSTN. Thereby, regulates cofilin-dependent actin cytoskeleton reorganization, being required for normal progress through mitosis and normal cytokinesis. Does not dephosphorylate phosphothreonines in LIMK1. Does not dephosphorylate peptides containing phosphotyrosine. This is Chronophin from Homo sapiens (Human).